Reading from the N-terminus, the 388-residue chain is Ribonucleoside-diphosphate reductase subunit beta (388 aa).

Fe cation is bound by residues D84, E115, and H118. Y122 is a catalytic residue. Fe cation-binding residues include E212, E247, and H250.

This sequence belongs to the ribonucleoside diphosphate reductase small chain family. Heterodimer of a large and a small subunit. It depends on Fe cation as a cofactor.

The catalysed reaction is a 2'-deoxyribonucleoside 5'-diphosphate + [thioredoxin]-disulfide + H2O = a ribonucleoside 5'-diphosphate + [thioredoxin]-dithiol. Its function is as follows. Provides the precursors necessary for DNA synthesis. Catalyzes the biosynthesis of deoxyribonucleotides from the corresponding ribonucleotides. In Escherichia coli (Bacteriophage T4), this protein is Ribonucleoside-diphosphate reductase subunit beta (NRDB).